A 435-amino-acid chain; its full sequence is Trigger factor (435 aa).

The region spanning 163–248 is the PPIase FKBP-type domain; the sequence is DDITLIDFTG…INEIKRKELA (86 aa).

Belongs to the FKBP-type PPIase family. Tig subfamily.

It is found in the cytoplasm. The enzyme catalyses [protein]-peptidylproline (omega=180) = [protein]-peptidylproline (omega=0). Functionally, involved in protein export. Acts as a chaperone by maintaining the newly synthesized protein in an open conformation. Functions as a peptidyl-prolyl cis-trans isomerase. The sequence is that of Trigger factor from Desulforamulus reducens (strain ATCC BAA-1160 / DSM 100696 / MI-1) (Desulfotomaculum reducens).